The following is a 675-amino-acid chain: Potassium-transporting ATPase ATP-binding subunit (675 aa).

Transmembrane regions (helical) follow at residues 34-54 (IMFV…FPDI), 65-85 (LITI…SEAF), 216-236 (IALF…IVTL), and 245-265 (LILP…TTIG). Aspartate 304 acts as the 4-aspartylphosphate intermediate in catalysis. ATP is bound by residues aspartate 341, glutamate 345, 372–379 (FTAETRMS), and lysine 390. Residues aspartate 513 and aspartate 517 each contribute to the Mg(2+) site. The next 3 membrane-spanning stretches (helical) occupy residues 569-591 (ALTT…ALMM), 611-631 (AIIS…PIAM), and 644-664 (IFIN…FLGI).

It belongs to the cation transport ATPase (P-type) (TC 3.A.3) family. Type IA subfamily. In terms of assembly, the system is composed of three essential subunits: KdpA, KdpB and KdpC.

The protein localises to the cell membrane. It carries out the reaction K(+)(out) + ATP + H2O = K(+)(in) + ADP + phosphate + H(+). In terms of biological role, part of the high-affinity ATP-driven potassium transport (or Kdp) system, which catalyzes the hydrolysis of ATP coupled with the electrogenic transport of potassium into the cytoplasm. This subunit is responsible for energy coupling to the transport system and for the release of the potassium ions to the cytoplasm. In Staphylococcus aureus (strain bovine RF122 / ET3-1), this protein is Potassium-transporting ATPase ATP-binding subunit.